Here is a 345-residue protein sequence, read N- to C-terminus: N-malonyltransferase FDB2 (345 aa).

Residue C110 is the Acyl-thioester intermediate of the active site. Residue H158 is the Proton acceptor of the active site. The active site involves D173.

This sequence belongs to the arylamine N-acetyltransferase family.

It functions in the pathway xenobiotic degradation. Its function is as follows. N-malonyltransferase; part of the Fusarium detoxification of benzoxazolinone cluster 2 (FDB2) involved in the degradation of benzoxazolinones produced by the host plant. Maize, wheat, and rye produce the 2 benzoxazinone phytoanticipins 2,4-dihy-droxy-7-methoxy-1,4-benzoxazin-3-one (DIMBOA) and 2,4-dihydroxy-1,4-benzoxazin-3-one (DIBOA) that, due to their inherent instability once released, spontaneously degrade to the more stable corresponding benzoxazolinones, 6-methoxy-2-benzoxazolinone (MBOA) and 2-benzoxazolinone (BOA), respectively. The first step in the detoxification of benzoxazolinones involves the hydrolysis of the cyclic ester bond of benzoxazolinones by the FDB1 cluster gamma-lactamase MBL1 to aminophenols. MBL1 is able to convert BOA into 2-aminophenol (2-AP), as well as MBOA into 5-methoxy-2-aminophenol (2-AMP). The FDB2 cluster N-malonyltransferase FDB2/NAT1 then metabolizes aminophenols via N-malonylation to non-toxic malonamic acids. FDB2/NAT1 converts 2-AP into N-(2-hydroxyphenyl) malonamic acid (HPMA) and 2-AMP into N-(2-hydroxy-4-methoxyphenyl) malonamic acid (HMPMA). The duplicated dienlactone hydrolases DLH1 and DLH2 may provide redundant function for hydrolyzing the lactone moiety in the BOA molecule. The roles of the amidases an other enzymes encoded by the 2 FDB clusters have not been identified so far. The chain is N-malonyltransferase FDB2 from Gibberella moniliformis (strain M3125 / FGSC 7600) (Maize ear and stalk rot fungus).